A 400-amino-acid polypeptide reads, in one-letter code: Elongation factor Tu (400 aa).

The region spanning 10–208 (KPHLNVGTIG…TMDSYFPEPQ (199 aa)) is the tr-type G domain. Residues 19 to 26 (GHIDHGKT) are G1. 19–26 (GHIDHGKT) serves as a coordination point for GTP. Threonine 26 contributes to the Mg(2+) binding site. The tract at residues 60 to 64 (GITIN) is G2. Residues 81 to 84 (DCPG) form a G3 region. Residues 81–85 (DCPGH) and 136–139 (NKTD) contribute to the GTP site. Positions 136–139 (NKTD) are G4. Residues 174–176 (SAL) form a G5 region.

It belongs to the TRAFAC class translation factor GTPase superfamily. Classic translation factor GTPase family. EF-Tu/EF-1A subfamily. As to quaternary structure, monomer.

Its subcellular location is the cytoplasm. It catalyses the reaction GTP + H2O = GDP + phosphate + H(+). GTP hydrolase that promotes the GTP-dependent binding of aminoacyl-tRNA to the A-site of ribosomes during protein biosynthesis. This chain is Elongation factor Tu, found in Thermosipho africanus (strain TCF52B).